We begin with the raw amino-acid sequence, 131 residues long: Snaclec A8 (131 aa).

3 cysteine pairs are disulfide-bonded: C2-C13, C30-C129, and C104-C121. A C-type lectin domain is found at 9–130 (HEGHCYKVFN…CGQPYRFTCE (122 aa)).

The protein belongs to the snaclec family. As to quaternary structure, heterodimer; disulfide-linked. In terms of tissue distribution, expressed by the venom gland.

The protein resides in the secreted. Functionally, interferes with one step of hemostasis (modulation of platelet aggregation, or coagulation cascade, for example). This Macrovipera lebetinus (Levantine viper) protein is Snaclec A8.